Here is a 158-residue protein sequence, read N- to C-terminus: UPAR/Ly6 domain-containing protein crim (158 aa).

Residues 1–22 form the signal peptide; it reads MHYHTNLIAALLLAALIHEGSA. The Extracellular segment spans residues 23–136; sequence IWCYRCTSAT…FCFLDHRCNG (114 aa). Asn107 carries N-linked (GlcNAc...) asparagine glycosylation. The GPI-anchor amidated asparagine moiety is linked to residue Asn135. Positions 136–158 are cleaved as a propeptide — removed in mature form; it reads GASGLQTSAVIGLLTLIPALLLR. Residues 137–157 traverse the membrane as a helical segment; the sequence is ASGLQTSAVIGLLTLIPALLL. Arg158 is a topological domain (cytoplasmic).

This sequence belongs to the quiver family.

Its subcellular location is the membrane. In terms of biological role, required for septate junction assembly possibly by organizing the preassembly and transport of septate junction proteins. Involved in epithelial cell septate junction-mediated paracellular barrier functions of trachea, hindgut and salivary gland. In Drosophila melanogaster (Fruit fly), this protein is UPAR/Ly6 domain-containing protein crim.